We begin with the raw amino-acid sequence, 286 residues long: 4-hydroxybenzoate octaprenyltransferase (286 aa).

Helical transmembrane passes span 20–40, 43–63, 96–116, 142–162, 167–187, 210–230, 235–255, and 266–286; these read IGTL…AGGM, LKVL…GCII, LFVI…GLVV, FLGV…TGEV, WWLF…YAMV, QIIG…GWSA, VYGL…MLIF, and FLNN…DYLF.

Belongs to the UbiA prenyltransferase family. It depends on Mg(2+) as a cofactor.

It localises to the cell inner membrane. The enzyme catalyses all-trans-octaprenyl diphosphate + 4-hydroxybenzoate = 4-hydroxy-3-(all-trans-octaprenyl)benzoate + diphosphate. It functions in the pathway cofactor biosynthesis; ubiquinone biosynthesis. Its function is as follows. Catalyzes the prenylation of para-hydroxybenzoate (PHB) with an all-trans polyprenyl group. Mediates the second step in the final reaction sequence of ubiquinone-8 (UQ-8) biosynthesis, which is the condensation of the polyisoprenoid side chain with PHB, generating the first membrane-bound Q intermediate 3-octaprenyl-4-hydroxybenzoate. This Shewanella oneidensis (strain ATCC 700550 / JCM 31522 / CIP 106686 / LMG 19005 / NCIMB 14063 / MR-1) protein is 4-hydroxybenzoate octaprenyltransferase.